Reading from the N-terminus, the 421-residue chain is 3-phosphoshikimate 1-carboxyvinyltransferase (421 aa).

Positions 19, 20, and 24 each coordinate 3-phosphoshikimate. Lysine 19 provides a ligand contact to phosphoenolpyruvate. Phosphoenolpyruvate contacts are provided by glycine 88 and arginine 116. 3-phosphoshikimate contacts are provided by serine 160, glutamine 162, aspartate 307, and lysine 334. Glutamine 162 serves as a coordination point for phosphoenolpyruvate. Residue aspartate 307 is the Proton acceptor of the active site. Positions 338 and 380 each coordinate phosphoenolpyruvate.

This sequence belongs to the EPSP synthase family. Monomer.

It localises to the cytoplasm. It carries out the reaction 3-phosphoshikimate + phosphoenolpyruvate = 5-O-(1-carboxyvinyl)-3-phosphoshikimate + phosphate. The protein operates within metabolic intermediate biosynthesis; chorismate biosynthesis; chorismate from D-erythrose 4-phosphate and phosphoenolpyruvate: step 6/7. In terms of biological role, catalyzes the transfer of the enolpyruvyl moiety of phosphoenolpyruvate (PEP) to the 5-hydroxyl of shikimate-3-phosphate (S3P) to produce enolpyruvyl shikimate-3-phosphate and inorganic phosphate. In Thermotoga sp. (strain RQ2), this protein is 3-phosphoshikimate 1-carboxyvinyltransferase.